The sequence spans 234 residues: Purine nucleoside phosphorylase DeoD-type (234 aa).

His-5 contacts a purine D-ribonucleoside. Phosphate is bound by residues Gly-21, Arg-25, Arg-44, and 88-91 (RIGT). Residues 180–182 (DME) and 204–205 (SD) contribute to the a purine D-ribonucleoside site. Asp-205 (proton donor) is an active-site residue.

It belongs to the PNP/UDP phosphorylase family. Homohexamer; trimer of homodimers.

It carries out the reaction a purine D-ribonucleoside + phosphate = a purine nucleobase + alpha-D-ribose 1-phosphate. The catalysed reaction is a purine 2'-deoxy-D-ribonucleoside + phosphate = a purine nucleobase + 2-deoxy-alpha-D-ribose 1-phosphate. Functionally, catalyzes the reversible phosphorolytic breakdown of the N-glycosidic bond in the beta-(deoxy)ribonucleoside molecules, with the formation of the corresponding free purine bases and pentose-1-phosphate. The polypeptide is Purine nucleoside phosphorylase DeoD-type (Buchnera aphidicola subsp. Acyrthosiphon pisum (strain APS) (Acyrthosiphon pisum symbiotic bacterium)).